The primary structure comprises 350 residues: ATPase GET3 (350 aa).

Residue 26-33 coordinates ATP; sequence KGGVGKTT. Asp57 is a catalytic residue. 2 residues coordinate ATP: Glu241 and Asn268. Cys281 and Cys284 together coordinate Zn(2+).

The protein belongs to the arsA ATPase family. Homodimer. Component of the Golgi to ER traffic (GET) complex, which is composed of GET1, GET2 and GET3. Within the complex, GET1 and GET2 form a heterotetramer which is stabilized by phosphatidylinositol binding and which binds to the GET3 homodimer. Interacts with the chloride channel protein GEF1.

It localises to the cytoplasm. The protein resides in the endoplasmic reticulum. It is found in the golgi apparatus. In terms of biological role, ATPase required for the post-translational delivery of tail-anchored (TA) proteins to the endoplasmic reticulum. Recognizes and selectively binds the transmembrane domain of TA proteins in the cytosol. This complex then targets to the endoplasmic reticulum by membrane-bound receptors GET1 and GET2, where the tail-anchored protein is released for insertion. This process is regulated by ATP binding and hydrolysis. ATP binding drives the homodimer towards the closed dimer state, facilitating recognition of newly synthesized TA membrane proteins. ATP hydrolysis is required for insertion. Subsequently, the homodimer reverts towards the open dimer state, lowering its affinity for the GET1-GET2 receptor, and returning it to the cytosol to initiate a new round of targeting. Cooperates with the HDEL receptor ERD2 to mediate the ATP-dependent retrieval of resident ER proteins that contain a C-terminal H-D-E-L retention signal from the Golgi to the ER. Involved in low-level resistance to the oxyanions arsenite and arsenate, and in heat tolerance. This is ATPase GET3 from Candida glabrata (strain ATCC 2001 / BCRC 20586 / JCM 3761 / NBRC 0622 / NRRL Y-65 / CBS 138) (Yeast).